The sequence spans 377 residues: 4-hydroxy-3-methylbut-2-en-1-yl diphosphate synthase (flavodoxin) (377 aa).

Positions 275, 278, 310, and 317 each coordinate [4Fe-4S] cluster.

Belongs to the IspG family. It depends on [4Fe-4S] cluster as a cofactor.

The enzyme catalyses (2E)-4-hydroxy-3-methylbut-2-enyl diphosphate + oxidized [flavodoxin] + H2O + 2 H(+) = 2-C-methyl-D-erythritol 2,4-cyclic diphosphate + reduced [flavodoxin]. It functions in the pathway isoprenoid biosynthesis; isopentenyl diphosphate biosynthesis via DXP pathway; isopentenyl diphosphate from 1-deoxy-D-xylulose 5-phosphate: step 5/6. In terms of biological role, converts 2C-methyl-D-erythritol 2,4-cyclodiphosphate (ME-2,4cPP) into 1-hydroxy-2-methyl-2-(E)-butenyl 4-diphosphate. The polypeptide is 4-hydroxy-3-methylbut-2-en-1-yl diphosphate synthase (flavodoxin) (Jannaschia sp. (strain CCS1)).